Consider the following 456-residue polypeptide: MSNTYSLVNPFDNSPLGEYEYTPWATLENQLAMLKEGQLSQRKTAAFQRAGVLNKLAALLKEHSEEMATLITQETGKTILDSRVEMMRAYNAAIASAEEARQIQGESLDSDAYAPAGGKIGVVCWKPLGTILCITPFNFPINIAIHKIGPAYAAGNTILFKPGPQNTASAQLLVKLCYEAGMPENTLQLCMPEFSDLDRLNAHPDVNAINFTGGTAAANAISAAAGYKKLLLELGGNDPLIVMDDGDLEAATTAAINHRFATAGQRCTAAKRLFIHANVYEAFRDLLVEKSSKLVVGDPMKDDTFVGPVINQGAADQIRTLIEQAIEDGASVALGNQYEGAFVYPTILENVSPTSEIMVEEAFGPVMPLYKFESVEEIIPIINNTAYGLQAGVFSQNLATIKELYEQLDVGTLAANDGPGFRTEHFPFGGVKESGIGREGIKYAIREMSYTKTLVI.

213-218 lines the NAD(+) pocket; it reads GGTAAA. Active-site residues include E233 and C267.

Belongs to the aldehyde dehydrogenase family. In terms of assembly, homotetramer.

It carries out the reaction sulfoacetaldehyde + NAD(+) + H2O = sulfoacetate + NADH + 2 H(+). Mediates conversion of 2-sulfoacetaldehyde into sulfoacetate. The enzyme is specific for NAD; NADP is not a substrate. Part of a pathway that can utilize the amino group of taurine as a sole source of nitrogen for growth. This chain is Sulfoacetaldehyde dehydrogenase (safD), found in Neptuniibacter caesariensis.